Reading from the N-terminus, the 167-residue chain is Ubiquitin-fold modifier-conjugating enzyme 1 (167 aa).

Cys116 serves as the catalytic Glycyl thioester intermediate.

The protein belongs to the ubiquitin-conjugating enzyme family. UFC1 subfamily.

In terms of biological role, E2-like enzyme which forms an intermediate with UFM1 via a thioester linkage. The polypeptide is Ubiquitin-fold modifier-conjugating enzyme 1 (Anopheles gambiae (African malaria mosquito)).